Consider the following 272-residue polypeptide: WIMGHMVNNIKQIDEFVNLGSNAIETDVSFDKKANPEYTYHGTPCDCGRDCLRWEYFNDFVKALRTATTPGNSKYDKLFLVVFDLKTSSLYDYQASEAGTKLAKNLLQHYWNNGNNGGRAYIILSIPNLKHYKLITGFQQTLKDEGHAELLDKVGYDFSGNDDIGDVQKTYEKAGVTGHVWQSDGITNCLLRSFTRINAAVANRDSANGIINKVYYWTVDKRQTTRDTLDANVDGIMTNYPDITVEILNEDAYKTKFRIATYEDNPWETFKE.

The active site involves histidine 5. Mg(2+) contacts are provided by glutamate 25 and aspartate 27. Catalysis depends on histidine 41, which acts as the Nucleophile. Intrachain disulfides connect cysteine 45–cysteine 51 and cysteine 47–cysteine 189. Aspartate 84 contributes to the Mg(2+) binding site.

This sequence belongs to the arthropod phospholipase D family. Class II subfamily. Mg(2+) serves as cofactor. As to expression, expressed by the venom gland.

Its subcellular location is the secreted. It catalyses the reaction an N-(acyl)-sphingosylphosphocholine = an N-(acyl)-sphingosyl-1,3-cyclic phosphate + choline. The enzyme catalyses an N-(acyl)-sphingosylphosphoethanolamine = an N-(acyl)-sphingosyl-1,3-cyclic phosphate + ethanolamine. The catalysed reaction is a 1-acyl-sn-glycero-3-phosphocholine = a 1-acyl-sn-glycero-2,3-cyclic phosphate + choline. It carries out the reaction a 1-acyl-sn-glycero-3-phosphoethanolamine = a 1-acyl-sn-glycero-2,3-cyclic phosphate + ethanolamine. Dermonecrotic toxins cleave the phosphodiester linkage between the phosphate and headgroup of certain phospholipids (sphingolipid and lysolipid substrates), forming an alcohol (often choline) and a cyclic phosphate. This toxin acts on sphingomyelin (SM). It may also act on ceramide phosphoethanolamine (CPE), lysophosphatidylcholine (LPC) and lysophosphatidylethanolamine (LPE), but not on lysophosphatidylserine (LPS), and lysophosphatidylglycerol (LPG). It acts by transphosphatidylation, releasing exclusively cyclic phosphate products as second products. Induces dermonecrosis, hemolysis, increased vascular permeability, edema, inflammatory response, and platelet aggregation. The chain is Dermonecrotic toxin LvSicTox-alphaIC1biii from Loxosceles variegata (Recluse spider).